The sequence spans 403 residues: Serine/threonine-protein phosphatase 4 regulatory subunit 2-A (403 aa).

3 stretches are compositionally biased toward polar residues: residues 140–149 (EKNNSTSLNR), 156–170 (PSNS…NVNG), and 183–196 (SLSS…LPDS). The interval 140–403 (EKNNSTSLNR…DAPEEPMEQD (264 aa)) is disordered. Basic and acidic residues predominate over residues 197 to 211 (TENKESDLQQKEKSQ). Polar residues-rich tracts occupy residues 212 to 226 (SDSA…ATTS) and 371 to 387 (ATSS…SPME). Over residues 388–403 (NSEEATDAPEEPMEQD) the composition is skewed to acidic residues.

The protein belongs to the PPP4R2 family. As to quaternary structure, serine/threonine-protein phosphatase 4 (PP4) occurs in different assemblies of the catalytic and one or more regulatory subunits.

Functionally, regulatory subunit of serine/threonine-protein phosphatase 4 (PP4). In Xenopus laevis (African clawed frog), this protein is Serine/threonine-protein phosphatase 4 regulatory subunit 2-A (ppp4r2-a).